Reading from the N-terminus, the 1214-residue chain is SWI/SNF complex subunit SMARCC2 (1214 aa).

The segment at 1–274 (MAVRKKDGGP…PVSRRKKISA (274 aa)) is marR-like, BRCT and chromo domains module. Residues 10–136 (PNVKYYEAAD…IEKSLVQNNC (127 aa)) form the MarR-like domain. Positions 140–183 (PNIFLCPEIEPKLLGKLKDIIKRHQGTVTEDKNNASHVVYPVPG) constitute a BRCT; N-terminus domain. The Chromo domain maps to 189–217 (EWVRPVMKRDKQVLLHWGYYPDSYDTWIP). One can recognise a BRCT; C-terminus domain in the interval 233 to 257 (KPRKVHAKWILDTDTFNEWMNEEDY). Residues 257–413 (YEVNDDKNPV…GEQTKNPDLH (157 aa)) form a disordered region. The segment covering 275-284 (KTLTDEVNSP) has biased composition (polar residues). A phosphoserine mark is found at S283, S286, S302, S304, and S306. K312 is modified (N6-(ADP-ribosyl)lysine). K326 is subject to N6-acetyllysine. Positions 331–344 (HREEEQEDLTKDMD) are enriched in basic and acidic residues. Residues S347 and S387 each carry the phosphoserine modification. Residues 379–398 (DLDEQEDESMETTGKDEDEN) are compositionally biased toward acidic residues. The SWIRM domain maps to 424–521 (IIIPSYAAWF…YQVDAESRPT (98 aa)). T548 bears the Phosphothreonine mark. Glycyl lysine isopeptide (Lys-Gly) (interchain with G-Cter in SUMO2) cross-links involve residues K564, K566, K568, and K592. The SANT domain occupies 596 to 647 (SATREWTEQETLLLLEALEMYKDDWNKVSEHVGSRTQDECILHFLRLPIEDP). Residue K704 forms a Glycyl lysine isopeptide (Lys-Gly) (interchain with G-Cter in SUMO2) linkage. The disordered stretch occupies residues 724 to 852 (KVTGKADPAF…GERKTKVERD (129 aa)). Composition is skewed to basic and acidic residues over residues 747–777 (EPER…EPRE) and 784–852 (EEAK…VERD). K787 is covalently cross-linked (Glycyl lysine isopeptide (Lys-Gly) (interchain with G-Cter in SUMO2)). The residue at position 813 (S813) is a Phosphoserine. K848 is covalently cross-linked (Glycyl lysine isopeptide (Lys-Gly) (interchain with G-Cter in SUMO2)). Positions 907–934 (EELETIMDREREALEYQRQQLLADRQAF) form a coiled coil. 3 disordered regions span residues 947–983 (RQQH…PPAV), 997–1092 (PAGS…PPPP), and 1182–1214 (LPSA…PPPQ). Residues 949–959 (QHFQQMHQQQQ) show a composition bias toward low complexity. Residues 960 to 974 (QPPPALPPGSQPIPP) show a composition bias toward pro residues. Residues 997–1033 (PAGSGAPPGSLGPSEQIGQAGSTAGPQQQQPAGAPQP) are compositionally biased toward low complexity. Pro residues-rich tracts occupy residues 1034 to 1051 (GAVP…PSPF) and 1186 to 1202 (SPLP…PTAP).

This sequence belongs to the SMARCC family. Component of the multiprotein chromatin-remodeling complexes SWI/SNF: SWI/SNF-A (BAF), SWI/SNF-B (PBAF) and related complexes. The canonical complex contains a catalytic subunit (either SMARCA4/BRG1/BAF190A or SMARCA2/BRM/BAF190B) and at least SMARCE1, ACTL6A/BAF53, SMARCC1/BAF155, SMARCC2/BAF170, and SMARCB1/SNF5/BAF47. Other subunits specific to each of the complexes may also be present permitting several possible combinations developmentally and tissue specific. Component of the BAF complex, which includes at least actin (ACTB), ARID1A/BAF250A, ARID1B/BAF250B, SMARCA2/BRM, SMARCA4/BRG1, ACTL6A/BAF53, ACTL6B/BAF53B, SMARCE1/BAF57, SMARCC1/BAF155, SMARCC2/BAF170, SMARCB1/SNF5/INI1, and one or more SMARCD1/BAF60A, SMARCD2/BAF60B, or SMARCD3/BAF60C. In muscle cells, the BAF complex also contains DPF3. Component of neural progenitors-specific chromatin remodeling complex (npBAF complex) composed of at least, ARID1A/BAF250A or ARID1B/BAF250B, SMARCD1/BAF60A, SMARCD3/BAF60C, SMARCA2/BRM/BAF190B, SMARCA4/BRG1/BAF190A, SMARCB1/BAF47, SMARCC1/BAF155, SMARCE1/BAF57, SMARCC2/BAF170, PHF10/BAF45A, ACTL6A/BAF53A and actin. Component of neuron-specific chromatin remodeling complex (nBAF complex) composed of at least, ARID1A/BAF250A or ARID1B/BAF250B, SMARCD1/BAF60A, SMARCD3/BAF60C, SMARCA2/BRM/BAF190B, SMARCA4/BRG1/BAF190A, SMARCB1/BAF47, SMARCC1/BAF155, SMARCE1/BAF57, SMARCC2/BAF170, DPF1/BAF45B, DPF3/BAF45C, ACTL6B/BAF53B and actin. Component of the SWI/SNF-B (PBAF) chromatin remodeling complex, at least composed of SMARCA4/BRG1, SMARCB1/BAF47/SNF5, ACTL6A/BAF53A or ACTL6B/BAF53B, SMARCE1/BAF57, SMARCD1/BAF60A, SMARCD2/BAF60B, perhaps SMARCD3/BAF60C, SMARCC1/BAF155, SMARCC2/BAF170, PBRM1/BAF180, ARID2/BAF200 and actin. May also interact with the SIN3A histone deacetylase transcription repressor complex in conjunction with SMARCA2 and SMARCA4. Interacts with SMARD1. Interacts with KDM6B. Interaction with RCOR1. Interacts with DPF2. Interacts with ERCC6. Interacts with FOS. Post-translationally, mono-ADP-ribosylation at Lys-312 by SIRT6 promotes recruitment to the enhancer region of the Heme oxygenase-1 (HO-1) locus, leading to transcription activation of the locus. In terms of tissue distribution, ubiquitously expressed.

The protein localises to the nucleus. Its function is as follows. Involved in transcriptional activation and repression of select genes by chromatin remodeling (alteration of DNA-nucleosome topology). Component of SWI/SNF chromatin remodeling complexes that carry out key enzymatic activities, changing chromatin structure by altering DNA-histone contacts within a nucleosome in an ATP-dependent manner. Can stimulate the ATPase activity of the catalytic subunit of these complexes. May be required for CoREST dependent repression of neuronal specific gene promoters in non-neuronal cells. Belongs to the neural progenitors-specific chromatin remodeling complex (npBAF complex) and the neuron-specific chromatin remodeling complex (nBAF complex). During neural development a switch from a stem/progenitor to a postmitotic chromatin remodeling mechanism occurs as neurons exit the cell cycle and become committed to their adult state. The transition from proliferating neural stem/progenitor cells to postmitotic neurons requires a switch in subunit composition of the npBAF and nBAF complexes. As neural progenitors exit mitosis and differentiate into neurons, npBAF complexes which contain ACTL6A/BAF53A and PHF10/BAF45A, are exchanged for homologous alternative ACTL6B/BAF53B and DPF1/BAF45B or DPF3/BAF45C subunits in neuron-specific complexes (nBAF). The npBAF complex is essential for the self-renewal/proliferative capacity of the multipotent neural stem cells. The nBAF complex along with CREST plays a role regulating the activity of genes essential for dendrite growth. Critical regulator of myeloid differentiation, controlling granulocytopoiesis and the expression of genes involved in neutrophil granule formation. The chain is SWI/SNF complex subunit SMARCC2 (SMARCC2) from Homo sapiens (Human).